The primary structure comprises 392 residues: Small ribosomal subunit protein uS9m (392 aa).

Over residues 8–25 (RSSRAMSSASPASASDSD) the composition is skewed to low complexity. A disordered region spans residues 8-27 (RSSRAMSSASPASASDSDTS).

It belongs to the universal ribosomal protein uS9 family. Component of the mitochondrial ribosome small subunit (28S) which comprises a 12S rRNA and about 30 distinct proteins.

It localises to the mitochondrion. The polypeptide is Small ribosomal subunit protein uS9m (mrps-9) (Caenorhabditis elegans).